A 308-amino-acid chain; its full sequence is U-box domain-containing protein 54 (308 aa).

Residues 172 to 235 (FSEFSTSAEK…NESDEDPRLE (64 aa)) are disordered. Residues 210 to 227 (ESPKKGRKETIEKSKSNE) are compositionally biased toward basic and acidic residues. The U-box domain occupies 232–306 (PRLEDFKCPI…KDWLEKNPNY (75 aa)).

It carries out the reaction S-ubiquitinyl-[E2 ubiquitin-conjugating enzyme]-L-cysteine + [acceptor protein]-L-lysine = [E2 ubiquitin-conjugating enzyme]-L-cysteine + N(6)-ubiquitinyl-[acceptor protein]-L-lysine.. The protein operates within protein modification; protein ubiquitination. In terms of biological role, functions as an E3 ubiquitin ligase. The polypeptide is U-box domain-containing protein 54 (PUB54) (Arabidopsis thaliana (Mouse-ear cress)).